Consider the following 1147-residue polypeptide: Disease resistance protein RPP4 (1147 aa).

The TIR domain maps to 11 to 175; that stretch reads RRYDVFPSFS…KIANDVSNKL (165 aa). Residue Glu86 is part of the active site. The NB-ARC domain maps to 189–446; sequence EDHIKAIKSI…CFFNGFKVSN (258 aa). LRR repeat units lie at residues 548–573, 584–606, 608–629, 630–653, 655–676, 698–721, 722–743, 744–766, 767–790, 792–813, 814–836, 837–860, 926–950, 952–973, 974–996, 997–1017, 1018–1042, and 1044–1064; these read MRNL…LWSK, PLKL…TFKA, YLVN…TLPL, GSLK…SLAI, LEEL…IQNA, MCNL…IYLP, RKLK…NFKA, EYLV…TQPL, LERL…IQNA, TKLI…DLNL, ESLE…KMGC, LGSL…SKAT, LKRL…IGNL, HRLV…DVNL, SSLI…PLIS, TRIE…DLTR, and SVLL…IFRL.

As to quaternary structure, interacts with RSH1.

The enzyme catalyses NAD(+) + H2O = ADP-D-ribose + nicotinamide + H(+). TIR-NB-LRR receptor-like protein that confers resistance to the pathogen Hyaloperonospora arabidopsis isolates Emoy2 and Emwa1 (downy mildew disease). Plays a role in the regulation of temperature response during plant growth and survival. In Arabidopsis thaliana (Mouse-ear cress), this protein is Disease resistance protein RPP4.